The primary structure comprises 186 residues: MDKEHLKKNLQGKMEKALKVLDHELKGLRTGRASINLLDSVTVEAYGSKMPLSQVASLSTPDARTINVQVWDKSMVSSVEKGITIANLGLTPATDGQLIRLPIPTLTEERRQELVKLAHKYGEDTKISLRNIRRDGNEELKKLEKDNVIAKDEHHSLSEQVQKLTDDYSSKVDSVIKQKEQEIMTV.

Belongs to the RRF family.

It is found in the cytoplasm. In terms of biological role, responsible for the release of ribosomes from messenger RNA at the termination of protein biosynthesis. May increase the efficiency of translation by recycling ribosomes from one round of translation to another. This chain is Ribosome-recycling factor, found in Rickettsia massiliae (strain Mtu5).